We begin with the raw amino-acid sequence, 475 residues long: 3-isopropylmalate dehydratase large subunit (475 aa).

Residues Cys-353, Cys-414, and Cys-417 each contribute to the [4Fe-4S] cluster site.

It belongs to the aconitase/IPM isomerase family. LeuC type 1 subfamily. In terms of assembly, heterodimer of LeuC and LeuD. It depends on [4Fe-4S] cluster as a cofactor.

The enzyme catalyses (2R,3S)-3-isopropylmalate = (2S)-2-isopropylmalate. Its pathway is amino-acid biosynthesis; L-leucine biosynthesis; L-leucine from 3-methyl-2-oxobutanoate: step 2/4. Catalyzes the isomerization between 2-isopropylmalate and 3-isopropylmalate, via the formation of 2-isopropylmaleate. In Marinomonas sp. (strain MWYL1), this protein is 3-isopropylmalate dehydratase large subunit.